The chain runs to 445 residues: Homoserine dehydrogenase (445 aa).

Residues phenylalanine 26, threonine 28, and valine 29 each coordinate NADPH. NAD(+) is bound by residues valine 29 and alanine 58. Valine 29 provides a ligand contact to NADP(+). Lysine 119 serves as a coordination point for NADPH. Lysine 119 serves as a coordination point for NADP(+). 4 residues coordinate Na(+): glutamate 143, valine 146, glycine 148, and isoleucine 150. NADP(+) is bound by residues glycine 201 and glutamate 204. Residues glutamate 204 and aspartate 215 each contribute to the L-homoserine site. Lysine 219 acts as the Proton donor in catalysis. An NADPH-binding site is contributed by glycine 321. Glycine 321 is a binding site for NAD(+). Glycine 321 contributes to the NADP(+) binding site. The ACT domain occupies 368–445; the sequence is HLDMDVEDRV…INSVIRLERD (78 aa).

It belongs to the homoserine dehydrogenase family. A metal cation is required as a cofactor.

It carries out the reaction L-homoserine + NADP(+) = L-aspartate 4-semialdehyde + NADPH + H(+). It catalyses the reaction L-homoserine + NAD(+) = L-aspartate 4-semialdehyde + NADH + H(+). It functions in the pathway amino-acid biosynthesis; L-methionine biosynthesis via de novo pathway; L-homoserine from L-aspartate: step 3/3. It participates in amino-acid biosynthesis; L-threonine biosynthesis; L-threonine from L-aspartate: step 3/5. Feedback inhibition by threonine. Catalyzes the conversion of L-aspartate-beta-semialdehyde (L-Asa) to L-homoserine (L-Hse), the third step in the biosynthesis of threonine and methionine from aspartate. This is Homoserine dehydrogenase (hom) from Corynebacterium glutamicum (strain ATCC 13032 / DSM 20300 / JCM 1318 / BCRC 11384 / CCUG 27702 / LMG 3730 / NBRC 12168 / NCIMB 10025 / NRRL B-2784 / 534).